The sequence spans 196 residues: Peptidyl-tRNA hydrolase (196 aa).

Tyr17 lines the tRNA pocket. The active-site Proton acceptor is the His22. The tRNA site is built by Phe68, Asn70, and Asn116.

This sequence belongs to the PTH family. In terms of assembly, monomer.

It is found in the cytoplasm. It carries out the reaction an N-acyl-L-alpha-aminoacyl-tRNA + H2O = an N-acyl-L-amino acid + a tRNA + H(+). Its function is as follows. Hydrolyzes ribosome-free peptidyl-tRNAs (with 1 or more amino acids incorporated), which drop off the ribosome during protein synthesis, or as a result of ribosome stalling. In terms of biological role, catalyzes the release of premature peptidyl moieties from peptidyl-tRNA molecules trapped in stalled 50S ribosomal subunits, and thus maintains levels of free tRNAs and 50S ribosomes. The protein is Peptidyl-tRNA hydrolase of Yersinia pseudotuberculosis serotype O:1b (strain IP 31758).